The following is a 697-amino-acid chain: Serotransferrin (697 aa).

A signal peptide spans 1–19 (MRLTVGALLACAALGLCLA). Transferrin-like domains follow at residues 25–347 (VKWC…NQQE) and 360–682 (VKWC…NMRK). Disulfide bonds link Cys28-Cys67 and Cys38-Cys58. Arg42 carries the post-translational modification Dimethylated arginine. Fe(3+) is bound by residues Asp82 and Tyr114. 8 cysteine pairs are disulfide-bonded: Cys137–Cys213, Cys156–Cys350, Cys177–Cys193, Cys180–Cys196, Cys190–Cys198, Cys246–Cys260, Cys363–Cys395, and Cys373–Cys386. Hydrogencarbonate is bound by residues Thr139, Arg143, Ala145, and Gly146. Fe(3+) is bound at residue Tyr207. A Fe(3+)-binding site is contributed by His268. Position 388 is a phosphoserine (Ser388). Residues Asp410 and Tyr448 each contribute to the Fe(3+) site. Cystine bridges form between Cys420-Cys692, Cys435-Cys655, Cys472-Cys543, Cys496-Cys683, Cys506-Cys520, Cys517-Cys526, Cys583-Cys597, and Cys633-Cys638. Residues Thr474, Arg478, Ala480, and Gly481 each coordinate hydrogencarbonate. A glycan (N-linked (GlcNAc...) asparagine) is linked at Asn513. A Fe(3+)-binding site is contributed by Tyr537. His605 is a binding site for Fe(3+). At Ser684 the chain carries Phosphoserine.

This sequence belongs to the transferrin family. In terms of assembly, monomer. Part of a complex composed of SLC40A1/ferroportin, TF/transferrin and HEPH/hephaestin that transfers iron from cells to transferrin. In terms of tissue distribution, expressed by the liver and secreted in plasma.

Its subcellular location is the secreted. Functionally, transferrins are iron binding transport proteins which can bind two Fe(3+) ions in association with the binding of an anion, usually bicarbonate. It is responsible for the transport of iron from sites of absorption and heme degradation to those of storage and utilization. Serum transferrin may also have a further role in stimulating cell proliferation. This Mus musculus (Mouse) protein is Serotransferrin (Tf).